The chain runs to 1546 residues: DNA-directed RNA polymerase subunit beta' (1546 aa).

Positions 57, 59, 72, and 75 each coordinate Zn(2+). Mg(2+) is bound by residues Asp-756, Asp-758, and Asp-760. Zn(2+) is bound by residues Cys-1130, Cys-1211, Cys-1218, and Cys-1221. The disordered stretch occupies residues 1512 to 1546 (LEKYGEGSTSSDAVTGGQRYDDTRPGSSINPGYGD). Residues 1536–1546 (PGSSINPGYGD) show a composition bias toward polar residues.

This sequence belongs to the RNA polymerase beta' chain family. As to quaternary structure, the RNAP catalytic core consists of 2 alpha, 1 beta, 1 beta' and 1 omega subunit. When a sigma factor is associated with the core the holoenzyme is formed, which can initiate transcription. The cofactor is Mg(2+). Zn(2+) is required as a cofactor.

It carries out the reaction RNA(n) + a ribonucleoside 5'-triphosphate = RNA(n+1) + diphosphate. Functionally, DNA-dependent RNA polymerase catalyzes the transcription of DNA into RNA using the four ribonucleoside triphosphates as substrates. The chain is DNA-directed RNA polymerase subunit beta' from Deinococcus radiodurans (strain ATCC 13939 / DSM 20539 / JCM 16871 / CCUG 27074 / LMG 4051 / NBRC 15346 / NCIMB 9279 / VKM B-1422 / R1).